An 883-amino-acid chain; its full sequence is Alanine--tRNA ligase (883 aa).

Residues His-560, His-564, Cys-665, and His-669 each contribute to the Zn(2+) site.

Belongs to the class-II aminoacyl-tRNA synthetase family. The cofactor is Zn(2+).

The protein localises to the cytoplasm. It carries out the reaction tRNA(Ala) + L-alanine + ATP = L-alanyl-tRNA(Ala) + AMP + diphosphate. In terms of biological role, catalyzes the attachment of alanine to tRNA(Ala) in a two-step reaction: alanine is first activated by ATP to form Ala-AMP and then transferred to the acceptor end of tRNA(Ala). Also edits incorrectly charged Ser-tRNA(Ala) and Gly-tRNA(Ala) via its editing domain. The polypeptide is Alanine--tRNA ligase (Mesomycoplasma hyopneumoniae (strain 7448) (Mycoplasma hyopneumoniae)).